The sequence spans 437 residues: uncharacterized protein (437 aa).

3 stretches are compositionally biased toward basic residues: residues 1–29 (MDTP…RHRN), 81–91 (LRGRHPRVRRV), and 101–118 (RRRH…GRNR). Disordered regions lie at residues 1-31 (MDTP…RNDH) and 77-437 (EHVP…QGTR). The span at 119 to 132 (HAGDRRAPGVDSRL) shows a compositional bias: basic and acidic residues. The span at 133-142 (RQQHQHPRGR) shows a compositional bias: basic residues. A compositionally biased stretch (basic and acidic residues) spans 143-164 (HASDRVQDGAHPRRQRLREQPR). Residues 165–190 (HAGRPRRRQPPRRGRSRGTHRRHLRQ) show a composition bias toward basic residues. 2 stretches are compositionally biased toward basic and acidic residues: residues 198 to 209 (GPDEDQAREFRG) and 217 to 253 (HPPT…EAGR). Composition is skewed to basic residues over residues 284–293 (TVHRGGRLRG) and 324–348 (PHSR…RVRH). The span at 371 to 382 (DAAAYASVPAHA) shows a compositional bias: low complexity.

This is an uncharacterized protein from Haloferax lucentense (strain DSM 14919 / JCM 9276 / NCIMB 13854 / Aa 2.2) (Haloferax alicantei).